A 126-amino-acid chain; its full sequence is Large ribosomal subunit protein bL12 (126 aa).

Belongs to the bacterial ribosomal protein bL12 family. In terms of assembly, homodimer. Part of the ribosomal stalk of the 50S ribosomal subunit. Forms a multimeric L10(L12)X complex, where L10 forms an elongated spine to which 2 to 4 L12 dimers bind in a sequential fashion. Binds GTP-bound translation factors.

Its function is as follows. Forms part of the ribosomal stalk which helps the ribosome interact with GTP-bound translation factors. Is thus essential for accurate translation. In Caulobacter sp. (strain K31), this protein is Large ribosomal subunit protein bL12.